Here is a 243-residue protein sequence, read N- to C-terminus: UPF0246 protein MGAS9429_Spy1799 (243 aa).

This sequence belongs to the UPF0246 family.

In Streptococcus pyogenes serotype M12 (strain MGAS9429), this protein is UPF0246 protein MGAS9429_Spy1799.